Reading from the N-terminus, the 103-residue chain is Astacin-like peptidase p16 (103 aa).

In terms of domain architecture, Peptidase M12A spans 1–103; that stretch reads NAIPGQHYRW…DAFSRDGSPM (103 aa).

Requires Zn(2+) as cofactor.

Active against casein. Has a role as a digestive enzyme. This Argiope aurantia (Black-and-yellow garden spider) protein is Astacin-like peptidase p16.